A 332-amino-acid polypeptide reads, in one-letter code: uncharacterized protein (332 aa).

The signal sequence occupies residues 1 to 32 (MSRDRGARGLRKYGRFALATGAATALSLTASG). Cysteine 33 carries the N-palmitoyl cysteine lipid modification. A lipid anchor (S-diacylglycerol cysteine) is attached at cysteine 33.

The protein resides in the cell membrane. This is an uncharacterized protein from Streptomyces avermitilis (strain ATCC 31267 / DSM 46492 / JCM 5070 / NBRC 14893 / NCIMB 12804 / NRRL 8165 / MA-4680).